The sequence spans 454 residues: Jacalin-related lectin 37 (454 aa).

The region spanning 295 to 438 (SRFTPPRGIQ…LTALGVHFSP (144 aa)) is the Jacalin-type lectin domain.

This sequence belongs to the jacalin lectin family.

This is Jacalin-related lectin 37 (JAL37) from Arabidopsis thaliana (Mouse-ear cress).